A 613-amino-acid polypeptide reads, in one-letter code: Laccase 1 (613 aa).

The signal sequence occupies residues 1–20; it reads MSRFARLLLIVALFFTNAWA. Plastocyanin-like domains lie at 29–142 and 171–359; these read ITWK…IRPK and YLVV…MRIP. N-linked (GlcNAc...) asparagine glycosylation occurs at Asn-74. Positions 78, 80, 122, and 124 each coordinate Cu cation. Residues Asn-256, Asn-279, Asn-444, Asn-468, and Asn-484 are each glycosylated (N-linked (GlcNAc...) asparagine). The Plastocyanin-like 3 domain maps to 468-598; sequence NATRDTENDG…GGMGIAILDG (131 aa). Residues His-506, His-509, and His-511 each contribute to the Cu cation site. Asn-526 carries an N-linked (GlcNAc...) asparagine glycan. Residues His-580, Cys-581, His-582, and His-586 each coordinate Cu cation.

This sequence belongs to the multicopper oxidase family. Requires Cu cation as cofactor.

It localises to the cell surface. It participates in pigment biosynthesis. In terms of biological role, laccase; part of the Pks1 gene cluster that mediates the biosynthesis of an anthraquinone derivative pigment that contributes to conidial pigmentation that provides protection from UV radiation, heat and cold stress. The polyketide synthase Pks1 produces 1-acetyl-2,4,6,8-tetrahydroxy-9,10-anthraquinone though condensation of acetyl-CoA with malonyl-CoA. The dehydratase EthD and the laccase Mlac1 further convert the anthraquinone derivative into the final conidial pigment. The chain is Laccase 1 from Metarhizium robertsii (strain ARSEF 23 / ATCC MYA-3075) (Metarhizium anisopliae (strain ARSEF 23)).